The following is a 195-amino-acid chain: dTTP/UTP pyrophosphatase (195 aa).

The active-site Proton acceptor is Asp73.

The protein belongs to the Maf family. YhdE subfamily. A divalent metal cation serves as cofactor.

Its subcellular location is the cytoplasm. It carries out the reaction dTTP + H2O = dTMP + diphosphate + H(+). The catalysed reaction is UTP + H2O = UMP + diphosphate + H(+). Nucleoside triphosphate pyrophosphatase that hydrolyzes dTTP and UTP. May have a dual role in cell division arrest and in preventing the incorporation of modified nucleotides into cellular nucleic acids. The sequence is that of dTTP/UTP pyrophosphatase from Desulfotalea psychrophila (strain LSv54 / DSM 12343).